Reading from the N-terminus, the 227-residue chain is Cytochrome c oxidase subunit 2 (227 aa).

The Mitochondrial intermembrane segment spans residues 1-14 (MAHAAQVGLQDATS). Residues 15-45 (PIMEELITFHDHALMIIFLICFLVLYALFLT) form a helical membrane-spanning segment. Residues 46 to 59 (LTTKLTNTNISDAQ) lie on the Mitochondrial matrix side of the membrane. Residues 60-87 (EMETVWTILPAIILVLIALPSLRILYMT) traverse the membrane as a helical segment. The Mitochondrial intermembrane segment spans residues 88–227 (DEVNDPSLTI…IFEMGPVFTL (140 aa)). The Cu cation site is built by H161, C196, E198, C200, H204, and M207. E198 contributes to the Mg(2+) binding site.

This sequence belongs to the cytochrome c oxidase subunit 2 family. In terms of assembly, component of the cytochrome c oxidase (complex IV, CIV), a multisubunit enzyme composed of 14 subunits. The complex is composed of a catalytic core of 3 subunits MT-CO1, MT-CO2 and MT-CO3, encoded in the mitochondrial DNA, and 11 supernumerary subunits COX4I1 (or COX4I2), COX5A, COX5B, COX6A1 (or COX6A2), COX6B1 (or COX6B2), COX6C, COX7A2 (or COX7A1), COX7B, COX7C, COX8A and NDUFA4, which are encoded in the nuclear genome. The complex exists as a monomer or a dimer and forms supercomplexes (SCs) in the inner mitochondrial membrane with NADH-ubiquinone oxidoreductase (complex I, CI) and ubiquinol-cytochrome c oxidoreductase (cytochrome b-c1 complex, complex III, CIII), resulting in different assemblies (supercomplex SCI(1)III(2)IV(1) and megacomplex MCI(2)III(2)IV(2)). Found in a complex with TMEM177, COA6, COX18, COX20, SCO1 and SCO2. Interacts with TMEM177 in a COX20-dependent manner. Interacts with COX20. Interacts with COX16. It depends on Cu cation as a cofactor.

It is found in the mitochondrion inner membrane. The enzyme catalyses 4 Fe(II)-[cytochrome c] + O2 + 8 H(+)(in) = 4 Fe(III)-[cytochrome c] + 2 H2O + 4 H(+)(out). Component of the cytochrome c oxidase, the last enzyme in the mitochondrial electron transport chain which drives oxidative phosphorylation. The respiratory chain contains 3 multisubunit complexes succinate dehydrogenase (complex II, CII), ubiquinol-cytochrome c oxidoreductase (cytochrome b-c1 complex, complex III, CIII) and cytochrome c oxidase (complex IV, CIV), that cooperate to transfer electrons derived from NADH and succinate to molecular oxygen, creating an electrochemical gradient over the inner membrane that drives transmembrane transport and the ATP synthase. Cytochrome c oxidase is the component of the respiratory chain that catalyzes the reduction of oxygen to water. Electrons originating from reduced cytochrome c in the intermembrane space (IMS) are transferred via the dinuclear copper A center (CU(A)) of subunit 2 and heme A of subunit 1 to the active site in subunit 1, a binuclear center (BNC) formed by heme A3 and copper B (CU(B)). The BNC reduces molecular oxygen to 2 water molecules using 4 electrons from cytochrome c in the IMS and 4 protons from the mitochondrial matrix. This Homo sapiens (Human) protein is Cytochrome c oxidase subunit 2 (MT-CO2).